A 652-amino-acid polypeptide reads, in one-letter code: Coiled-coil domain-containing protein 81 (652 aa).

Ser206 is subject to Phosphoserine. A compositionally biased stretch (basic and acidic residues) spans Lys238–Ser256. The tract at residues Lys238–Lys258 is disordered. Phosphoserine is present on residues Ser275, Ser296, and Ser417. A coiled-coil region spans residues Met436–Asn493.

The protein resides in the cytoplasm. It localises to the cytoskeleton. It is found in the microtubule organizing center. The protein localises to the centrosome. The polypeptide is Coiled-coil domain-containing protein 81 (CCDC81) (Homo sapiens (Human)).